The following is a 37-amino-acid chain: Large ribosomal subunit protein bL36 (37 aa).

It belongs to the bacterial ribosomal protein bL36 family.

The polypeptide is Large ribosomal subunit protein bL36 (Helicobacter pylori (strain HPAG1)).